The following is a 102-amino-acid chain: Large ribosomal subunit protein uL24 (102 aa).

Positions 1-22 (MHVKKGDTVQVMSGKDKGKQGV) are disordered.

It belongs to the universal ribosomal protein uL24 family. In terms of assembly, part of the 50S ribosomal subunit.

One of two assembly initiator proteins, it binds directly to the 5'-end of the 23S rRNA, where it nucleates assembly of the 50S subunit. In terms of biological role, one of the proteins that surrounds the polypeptide exit tunnel on the outside of the subunit. The sequence is that of Large ribosomal subunit protein uL24 from Exiguobacterium sp. (strain ATCC BAA-1283 / AT1b).